A 481-amino-acid polypeptide reads, in one-letter code: 3-isopropylmalate dehydratase large subunit (481 aa).

[4Fe-4S] cluster is bound by residues Cys-363, Cys-423, and Cys-426. Residues Asp-432–His-459 are disordered.

Belongs to the aconitase/IPM isomerase family. LeuC type 1 subfamily. Heterodimer of LeuC and LeuD. Requires [4Fe-4S] cluster as cofactor.

The catalysed reaction is (2R,3S)-3-isopropylmalate = (2S)-2-isopropylmalate. It functions in the pathway amino-acid biosynthesis; L-leucine biosynthesis; L-leucine from 3-methyl-2-oxobutanoate: step 2/4. Its function is as follows. Catalyzes the isomerization between 2-isopropylmalate and 3-isopropylmalate, via the formation of 2-isopropylmaleate. The polypeptide is 3-isopropylmalate dehydratase large subunit (Corynebacterium glutamicum (strain ATCC 13032 / DSM 20300 / JCM 1318 / BCRC 11384 / CCUG 27702 / LMG 3730 / NBRC 12168 / NCIMB 10025 / NRRL B-2784 / 534)).